An 896-amino-acid chain; its full sequence is Sodium/hydrogen exchanger 5 (896 aa).

Over 1–45 (MLRAALSLLALPLAGAAEEPTQKPESPGEPPPGLELFRWQWHEVE) the chain is Cytoplasmic. The helical transmembrane segment at 46 to 66 (APYLVALWILVASLAKIVFHL) threads the bilayer. Over 67 to 73 (SRKVTSL) the chain is Extracellular. The helical transmembrane segment at 74–94 (VPESCLLILLGLVLGGIVLAV) threads the bilayer. Residues 95-103 (AKKAEYQLE) are Cytoplasmic-facing. The chain crosses the membrane as a helical span at residues 104–124 (PGTFFLFLLPPIVLDSGYFMP). Topologically, residues 125–134 (SRLFFDNLGA) are extracellular. Residues 135-155 (ILTYAVVGTLWNAFTTGAALW) form a helical membrane-spanning segment. Residues 156 to 173 (GLQQAGLVAPRVQAGLLD) are Cytoplasmic-facing. A helical transmembrane segment spans residues 174-194 (FLLFGSLISAVDPVAVLAVFE). Topologically, residues 195-200 (EVHVNE) are extracellular. An N-linked (GlcNAc...) asparagine glycan is attached at N199. Residues 201-221 (TLFIIVFGESLLNDAVTVVLY) form a helical membrane-spanning segment. Over 222–246 (KVCNSFVEMGSANVQATDYLKGVAS) the chain is Cytoplasmic. Residues 247-267 (LFVVSLGGAAVGLVFAFLLAL) form a helical membrane-spanning segment. Over 268–276 (TTRFTKRVR) the chain is Extracellular. Residues 277 to 297 (IIEPLLVFLLAYAAYLTAEMA) form a helical membrane-spanning segment. Topologically, residues 298-331 (SLSAILAVTMCGLGCKKYVEANISHKSRTTVKYT) are cytoplasmic. The chain crosses the membrane as a helical span at residues 332–352 (MKTLASCAETVIFMLLGISAV). Over 353–360 (DSSKWAWD) the chain is Extracellular. The chain crosses the membrane as a helical span at residues 361-381 (SGLVLGTLIFILFFRALGVVL). The Cytoplasmic segment spans residues 382–398 (QTWVLNQFRLVPLDKID). A helical membrane pass occupies residues 399 to 419 (QVVMSYGGLRGAVAFALVILL). The Extracellular segment spans residues 420–428 (DRTKVPAKD). A helical membrane pass occupies residues 429 to 449 (YFVATTIVVVFFTVIVQGLTI). Residues 450–896 (KPLVKWLKVK…CIQFNRGSRL (447 aa)) lie on the Cytoplasmic side of the membrane. The required for interaction with ARRB2 stretch occupies residues 576-721 (GSGACLDLQV…SETEKEDDEG (146 aa)). 3 disordered regions span residues 658-686 (TKSK…GKHR), 701-720 (ESEE…EDDE), and 818-864 (HPRG…QQQE). Over residues 660–672 (SKPRPRKTGRRKK) the composition is skewed to basic residues. The segment covering 854–864 (ESSADLPQQQE) has biased composition (polar residues).

The protein belongs to the monovalent cation:proton antiporter 1 (CPA1) transporter (TC 2.A.36) family. Interacts with CHP1 and CHP2. Interacts with ARRB2; facilitates the endocytosis of SLC9A5 from the plasma membrane. Interacts with RACK1; this interaction positively regulates SLC9A5 activity and promotes SLC9A5 localization to focal adhesions. Interacts with SCAMP2; this interaction regulates SLC9A5 cell-surface targeting and SLC9A5 activity. In terms of processing, phosphorylated by PRKAA2; promotes its accumulation at the cell surface. Phosphorylated by CSNK2A1 in a manner favoring its beta-arrestin binding and endocytosis. Mainly expressed in brain. Expressed in neurons of the central and peripheral nervous system. Expressed also in testis, spleen, and skeletal muscle.

The protein localises to the cell membrane. It is found in the recycling endosome membrane. It localises to the cell projection. The protein resides in the dendritic spine membrane. Its subcellular location is the synaptic cell membrane. The protein localises to the cell junction. It is found in the focal adhesion. It carries out the reaction Na(+)(in) + H(+)(out) = Na(+)(out) + H(+)(in). With respect to regulation, ATP-depletion almost completely abolishes SLC9A5 activity. Inhibited by amiloride compounds. In terms of biological role, plasma membrane Na(+)/H(+) antiporter. Mediates the electroneutral exchange of intracellular H(+) ions for extracellular Na(+) in 1:1 stoichiometry, thus regulating intracellular pH homeostasis, in particular in neural tissues. Acts as a negative regulator of dendritic spine growth. Plays a role in postsynaptic remodeling and signaling. Can also contribute to organellar pH regulation, with consequences for receptor tyrosine kinase trafficking. In Homo sapiens (Human), this protein is Sodium/hydrogen exchanger 5.